The chain runs to 349 residues: GTPase Obg (349 aa).

Positions M1–I159 constitute an Obg domain. The OBG-type G domain maps to A160 to G327. Residues G166–S173, F191–H195, D212–G215, N279–D282, and S308–V310 each bind GTP. Mg(2+)-binding residues include S173 and T193.

It belongs to the TRAFAC class OBG-HflX-like GTPase superfamily. OBG GTPase family. As to quaternary structure, monomer. Mg(2+) is required as a cofactor.

The protein localises to the cytoplasm. An essential GTPase which binds GTP, GDP and possibly (p)ppGpp with moderate affinity, with high nucleotide exchange rates and a fairly low GTP hydrolysis rate. Plays a role in control of the cell cycle, stress response, ribosome biogenesis and in those bacteria that undergo differentiation, in morphogenesis control. This chain is GTPase Obg, found in Rhodopseudomonas palustris (strain BisB18).